The sequence spans 137 residues: Large ribosomal subunit protein uL16c (137 aa).

The disordered stretch occupies residues 1 to 21 (MLSPKRTKFRRHHRGRMKGKA).

It belongs to the universal ribosomal protein uL16 family. Part of the 50S ribosomal subunit.

It is found in the plastid. It localises to the chloroplast. The polypeptide is Large ribosomal subunit protein uL16c (Tupiella akineta (Green alga)).